Reading from the N-terminus, the 1029-residue chain is Chitin synthase 2 (1029 aa).

Disordered regions lie at residues 1–160 (MDRP…GARS), 174–216 (SDVD…SHLR), and 234–257 (AHYG…QKSR). The span at 61-77 (PSVSSIHSRPSSISNIP) shows a compositional bias: low complexity. The span at 244 to 257 (DQQRRGVREPQKSR) shows a compositional bias: basic and acidic residues. Asn348 carries an N-linked (GlcNAc...) asparagine glycan. Helical transmembrane passes span 639–659 (WLNG…QLWA), 681–701 (VLFT…VAGG), 716–736 (LYIF…QFIL), 752–772 (SMVI…YIVI), 791–811 (NLIV…FIYL), 820–840 (SIQY…YAFC), 918–938 (YMVV…SEIY), and 952–972 (ILWS…TFAI).

The protein belongs to the chitin synthase family. Class II subfamily.

The protein localises to the cell membrane. The enzyme catalyses [(1-&gt;4)-N-acetyl-beta-D-glucosaminyl](n) + UDP-N-acetyl-alpha-D-glucosamine = [(1-&gt;4)-N-acetyl-beta-D-glucosaminyl](n+1) + UDP + H(+). Polymerizes chitin, a structural polymer of the cell wall and septum, by transferring the sugar moiety of UDP-GlcNAc to the non-reducing end of the growing chitin polymer. Plays an important role in cell wall integrity and has distinct functions in invasive hyphae and vegetative hyphae, but is not involved in plant infection. This Pyricularia oryzae (strain 70-15 / ATCC MYA-4617 / FGSC 8958) (Rice blast fungus) protein is Chitin synthase 2.